We begin with the raw amino-acid sequence, 298 residues long: Probable alpha-L-glutamate ligase (298 aa).

An ATP-grasp domain is found at 104 to 287; sequence MQLLSRHGIG…VAGKIIEFLE (184 aa). Residues K141, 178–179, D187, and 211–213 each bind ATP; these read EY and RSN. Mg(2+) is bound by residues D248, E260, and N262. Positions 248, 260, and 262 each coordinate Mn(2+).

This sequence belongs to the RimK family. It depends on Mg(2+) as a cofactor. Requires Mn(2+) as cofactor.

The polypeptide is Probable alpha-L-glutamate ligase (Aeromonas salmonicida (strain A449)).